We begin with the raw amino-acid sequence, 475 residues long: Ribulose bisphosphate carboxylase large chain (475 aa).

Residues 1-2 constitute a propeptide that is removed on maturation; it reads MS. P3 carries the N-acetylproline modification. K14 is modified (N6,N6,N6-trimethyllysine). The substrate site is built by N123 and T173. The Proton acceptor role is filled by K175. Residue K177 coordinates substrate. K201, D203, and E204 together coordinate Mg(2+). An N6-carboxylysine modification is found at K201. H294 functions as the Proton acceptor in the catalytic mechanism. Residues R295, H327, and S379 each contribute to the substrate site.

It belongs to the RuBisCO large chain family. Type I subfamily. Heterohexadecamer of 8 large chains and 8 small chains; disulfide-linked. The disulfide link is formed within the large subunit homodimers. The cofactor is Mg(2+). The disulfide bond which can form in the large chain dimeric partners within the hexadecamer appears to be associated with oxidative stress and protein turnover.

It localises to the plastid. Its subcellular location is the chloroplast. It catalyses the reaction 2 (2R)-3-phosphoglycerate + 2 H(+) = D-ribulose 1,5-bisphosphate + CO2 + H2O. The enzyme catalyses D-ribulose 1,5-bisphosphate + O2 = 2-phosphoglycolate + (2R)-3-phosphoglycerate + 2 H(+). Its function is as follows. RuBisCO catalyzes two reactions: the carboxylation of D-ribulose 1,5-bisphosphate, the primary event in carbon dioxide fixation, as well as the oxidative fragmentation of the pentose substrate in the photorespiration process. Both reactions occur simultaneously and in competition at the same active site. This chain is Ribulose bisphosphate carboxylase large chain, found in Magnolia acuminata (Cucumber tree).